The primary structure comprises 118 residues: Ribonuclease P protein component (118 aa).

This sequence belongs to the RnpA family. In terms of assembly, consists of a catalytic RNA component (M1 or rnpB) and a protein subunit.

It catalyses the reaction Endonucleolytic cleavage of RNA, removing 5'-extranucleotides from tRNA precursor.. Functionally, RNaseP catalyzes the removal of the 5'-leader sequence from pre-tRNA to produce the mature 5'-terminus. It can also cleave other RNA substrates such as 4.5S RNA. The protein component plays an auxiliary but essential role in vivo by binding to the 5'-leader sequence and broadening the substrate specificity of the ribozyme. The polypeptide is Ribonuclease P protein component (Rickettsia peacockii (strain Rustic)).